Reading from the N-terminus, the 133-residue chain is ATP synthase epsilon chain, chloroplastic (133 aa).

This sequence belongs to the ATPase epsilon chain family. In terms of assembly, F-type ATPases have 2 components, CF(1) - the catalytic core - and CF(0) - the membrane proton channel. CF(1) has five subunits: alpha(3), beta(3), gamma(1), delta(1), epsilon(1). CF(0) has three main subunits: a, b and c.

The protein resides in the plastid. It localises to the chloroplast thylakoid membrane. Functionally, produces ATP from ADP in the presence of a proton gradient across the membrane. This chain is ATP synthase epsilon chain, chloroplastic, found in Helianthus annuus (Common sunflower).